Reading from the N-terminus, the 909-residue chain is Cutinase transcription factor 1 alpha (909 aa).

Residues 1–51 are disordered; that stretch reads MSSGDAPPQAQPQPHQQEQPNQRQSSTPAPSAAPVPPAPSTSTSNSAGGVS. The span at 12–30 shows a compositional bias: low complexity; the sequence is PQPHQQEQPNQRQSSTPAP. The zn(2)-C6 fungal-type DNA-binding region spans 61–90; it reads CETCHARKVRCDAASLGVPCTNCVAFQIEC. Disordered stretches follow at residues 95–159, 651–757, and 841–878; these read PKRK…EAQA, AEGK…SFSV, and LPQG…QGQA. Over residues 110–119 the composition is skewed to basic and acidic residues; that stretch reads KDSDSDRGDG. Positions 142-156 are enriched in polar residues; that stretch reads VFHSHNGTPPTTLTE. Basic and acidic residues predominate over residues 669 to 683; sequence QHSRQQEAPKRKYDE. 3 stretches are compositionally biased toward polar residues: residues 704 to 717, 737 to 755, and 865 to 878; these read PQTP…TSSM, GGTN…NPSF, and SPDS…QGQA.

It is found in the nucleus. This is Cutinase transcription factor 1 alpha (CTF1-ALPHA) from Fusarium vanettenii (Neocosmospora pisi).